The following is a 260-amino-acid chain: Ribonuclease HII (260 aa).

An RNase H type-2 domain is found at 70–260; the sequence is QAIAGIDEVG…PIKSMLKEKN (191 aa). 3 residues coordinate a divalent metal cation: D76, E77, and D171.

The protein belongs to the RNase HII family. Mn(2+) is required as a cofactor. Requires Mg(2+) as cofactor.

It localises to the cytoplasm. The catalysed reaction is Endonucleolytic cleavage to 5'-phosphomonoester.. In terms of biological role, endonuclease that specifically degrades the RNA of RNA-DNA hybrids. The chain is Ribonuclease HII from Streptococcus mutans serotype c (strain ATCC 700610 / UA159).